The primary structure comprises 834 residues: DNA gyrase subunit A (834 aa).

The 467-residue stretch at 34–500 (LPDIRDGLKP…ADDIRDIEDI (467 aa)) folds into the Topo IIA-type catalytic domain. The active-site O-(5'-phospho-DNA)-tyrosine intermediate is the Y122. The GyrA-box signature appears at 527 to 533 (QRRGGHG). The segment at 810–834 (LSSNENDDEVLSGSEEECSDTVSLR) is disordered. Positions 814–828 (ENDDEVLSGSEEECS) are enriched in acidic residues.

This sequence belongs to the type II topoisomerase GyrA/ParC subunit family. Heterotetramer, composed of two GyrA and two GyrB chains. In the heterotetramer, GyrA contains the active site tyrosine that forms a transient covalent intermediate with DNA, while GyrB binds cofactors and catalyzes ATP hydrolysis.

Its subcellular location is the cytoplasm. It catalyses the reaction ATP-dependent breakage, passage and rejoining of double-stranded DNA.. In terms of biological role, a type II topoisomerase that negatively supercoils closed circular double-stranded (ds) DNA in an ATP-dependent manner to modulate DNA topology and maintain chromosomes in an underwound state. Negative supercoiling favors strand separation, and DNA replication, transcription, recombination and repair, all of which involve strand separation. Also able to catalyze the interconversion of other topological isomers of dsDNA rings, including catenanes and knotted rings. Type II topoisomerases break and join 2 DNA strands simultaneously in an ATP-dependent manner. The sequence is that of DNA gyrase subunit A from Chlamydia pneumoniae (Chlamydophila pneumoniae).